Consider the following 283-residue polypeptide: 1-acyl-sn-glycerol-3-phosphate acyltransferase alpha (283 aa).

The signal sequence occupies residues 1-26 (MDLWPGAWMLLLLLFLLLLFLLPTLW). At 27–37 (FCSPSAKYFFK) the chain is on the lumenal side. The chain crosses the membrane as a helical span at residues 38 to 58 (MAFYNGWILFLAVLAIPVCAV). The Cytoplasmic portion of the chain corresponds to 59-127 (RGRNVENMKI…PGRCVPIAKR (69 aa)). The HXXXXD motif motif lies at 104-109 (HQSSLD). Residues 128–148 (ELLWAGSAGLACWLAGVIFID) traverse the membrane as a helical segment. Residues 149–283 (RKRTGDAISV…DYLKKPGGGG (135 aa)) are Lumenal-facing. An EGTR motif motif is present at residues 178–181 (EGTR).

It belongs to the 1-acyl-sn-glycerol-3-phosphate acyltransferase family. As to expression, widely expressed. Expressed in adipose tissue and at high levels in testis and pancreas. Expressed at lower levels in tissues such as heart, brain, placenta, kidney, lung, spleen, thymus, prostate, ovary, intestine, colon, leukocyte and liver.

The protein localises to the endoplasmic reticulum membrane. It catalyses the reaction a 1-acyl-sn-glycero-3-phosphate + an acyl-CoA = a 1,2-diacyl-sn-glycero-3-phosphate + CoA. It carries out the reaction 1-(9Z-octadecenoyl)-sn-glycero-3-phosphate + (9Z)-octadecenoyl-CoA = 1,2-di-(9Z-octadecenoyl)-sn-glycero-3-phosphate + CoA. The enzyme catalyses 1-(9Z-octadecenoyl)-sn-glycero-3-phosphate + hexadecanoyl-CoA = 1-(9Z)-octadecenoyl-2-hexadecanoyl-sn-glycero-3-phosphate + CoA. The catalysed reaction is heptadecanoyl-CoA + 1-(9Z-octadecenoyl)-sn-glycero-3-phosphate = 1-(9Z)-octadecenoyl-2-heptadecanoyl-sn-glycero-3-phosphate + CoA. It catalyses the reaction 1-(9Z-octadecenoyl)-sn-glycero-3-phosphate + octadecanoyl-CoA = 1-(9Z-octadecenoyl)-2-octadecanoyl-sn-glycero-3-phosphate + CoA. It carries out the reaction 1-(9Z-octadecenoyl)-sn-glycero-3-phosphate + (9Z,12Z)-octadecadienoyl-CoA = 1-(9Z)-octadecenoyl-2-(9Z,12Z)-octadecadienoyl-sn-glycero-3-phosphate + CoA. The enzyme catalyses 1-(9Z-octadecenoyl)-sn-glycero-3-phosphate + tetradecanoyl-CoA = 1-(9Z)-octadecenoyl-2-tetradecanoyl-sn-glycero-3-phosphate + CoA. The catalysed reaction is pentadecanoyl-CoA + 1-(9Z-octadecenoyl)-sn-glycero-3-phosphate = 1-(9Z)-octadecenoyl-2-pentadecanoyl-sn-glycero-3-phosphate + CoA. It catalyses the reaction 1-hexadecanoyl-sn-glycero-3-phosphate + (9Z)-octadecenoyl-CoA = 1-hexadecanoyl-2-(9Z-octadecenoyl)-sn-glycero-3-phosphate + CoA. It carries out the reaction 1-(9Z,12Z,15Z)-octadecatrienoyl-sn-glycero-3-phosphate + (9Z)-octadecenoyl-CoA = 1-(9Z,12Z,15Z)-octadecatrienoyl-2-(9Z)-octadecenoyl-sn-glycero-3-phosphate + CoA. The enzyme catalyses 1-(6Z,9Z,12Z-octadecatrienoyl)-sn-glycero-3-phosphate + (9Z)-octadecenoyl-CoA = (6Z,9Z,12Z)-octadecatrienoyl-2-(9Z)-octadecenoyl-sn-glycero-3-phosphate + CoA. The catalysed reaction is 1-eicosanoyl-sn-glycero-3-phosphate + (9Z)-octadecenoyl-CoA = 1-eicosanoyl-2-(9Z)-octadecenoyl-sn-glycero-3-phosphate + CoA. It catalyses the reaction 1-tetradecanoyl-sn-glycerol 3-phosphate + (9Z)-octadecenoyl-CoA = 1-tetradecanoyl-2-(9Z)-octadecenoyl-sn-glycero-3-phosphate + CoA. It carries out the reaction 1-(9Z-octadecenoyl)-sn-glycero-3-phosphate + (5Z,8Z,11Z,14Z)-eicosatetraenoyl-CoA = 1-(9Z)-octadecenoyl-2-(5Z,8Z,11Z,14Z)-eicosatetraenoyl-sn-glycero-3-phosphate + CoA. The enzyme catalyses 1-(9Z-octadecenoyl)-sn-glycero-3-phosphate + dodecanoyl-CoA = 1-(9Z)-octadecenoyl-2-dodecanoyl-sn-glycero-3-phosphate + CoA. The catalysed reaction is (6Z)-octadecenoyl-CoA + 1-(9Z-octadecenoyl)-sn-glycero-3-phosphate = 1-(9Z)-octadecenoyl-2-(6Z)-octadecenoyl-sn-glycero-3-phosphate + CoA. It catalyses the reaction (11Z)-octadecenoyl-CoA + 1-(9Z-octadecenoyl)-sn-glycero-3-phosphate = 1-(9Z)-octadecenoyl-2-(11Z)-octadecenoyl-sn-glycero-3-phosphate + CoA. It carries out the reaction (9Z)-hexadecenoyl-CoA + 1-(9Z-octadecenoyl)-sn-glycero-3-phosphate = 1-(9Z-octadecenoyl)-2-(9Z-hexadecenoyl)-sn-glycero-3-phosphate + CoA. It functions in the pathway phospholipid metabolism; CDP-diacylglycerol biosynthesis; CDP-diacylglycerol from sn-glycerol 3-phosphate: step 2/3. In terms of biological role, converts 1-acyl-sn-glycerol-3-phosphate (lysophosphatidic acid or LPA) into 1,2-diacyl-sn-glycerol-3-phosphate (phosphatidic acid or PA) by incorporating an acyl moiety at the sn-2 position of the glycerol backbone. This Homo sapiens (Human) protein is 1-acyl-sn-glycerol-3-phosphate acyltransferase alpha (AGPAT1).